Here is a 187-residue protein sequence, read N- to C-terminus: Peptidyl-tRNA hydrolase (187 aa).

TRNA is bound at residue Tyr-14. The active-site Proton acceptor is His-19. TRNA-binding residues include Tyr-63 and Asn-65.

The protein belongs to the PTH family. As to quaternary structure, monomer.

The protein localises to the cytoplasm. It carries out the reaction an N-acyl-L-alpha-aminoacyl-tRNA + H2O = an N-acyl-L-amino acid + a tRNA + H(+). In terms of biological role, hydrolyzes ribosome-free peptidyl-tRNAs (with 1 or more amino acids incorporated), which drop off the ribosome during protein synthesis, or as a result of ribosome stalling. Catalyzes the release of premature peptidyl moieties from peptidyl-tRNA molecules trapped in stalled 50S ribosomal subunits, and thus maintains levels of free tRNAs and 50S ribosomes. The chain is Peptidyl-tRNA hydrolase from Thermodesulfovibrio yellowstonii (strain ATCC 51303 / DSM 11347 / YP87).